Consider the following 340-residue polypeptide: Tetrathionate reductase subunit C (340 aa).

A run of 9 helical transmembrane segments spans residues 19–39 (WLPW…AALF), 57–77 (ALLI…ADLH), 94–114 (WMPW…LWFL), 128–148 (VTKW…IYTG), 164–184 (AFPV…MIVA), 195–215 (ILWG…MWVS), 236–256 (YYAV…SLAL), 266–286 (VLLV…LLIQ), and 306–326 (TDGW…LIII).

Belongs to the NrfD family. In terms of assembly, probably composed of three subunits: TtrA, TtrB and TtrC.

It localises to the cell inner membrane. In terms of biological role, part of a membrane-bound tetrathionate reductase that catalyzes the reduction of tetrathionate to thiosulfate. TtrC probably anchors TtrA and TtrB to the periplasmic face of the cytoplasmic membrane. May transfer electrons from membrane quinol to TtrB. During mice infection, the ability to use tetrathionate as an electron acceptor is a growth advantage for S.typhimurium over the competing microbiota in the lumen of the inflamed gut. This is Tetrathionate reductase subunit C (ttrC) from Salmonella typhimurium (strain LT2 / SGSC1412 / ATCC 700720).